Consider the following 807-residue polypeptide: Glycerol-3-phosphate acyltransferase (807 aa).

An HXXXXD motif motif is present at residues 308–313 (CHRSHM).

The protein belongs to the GPAT/DAPAT family.

Its subcellular location is the cell inner membrane. The catalysed reaction is sn-glycerol 3-phosphate + an acyl-CoA = a 1-acyl-sn-glycero-3-phosphate + CoA. Its pathway is phospholipid metabolism; CDP-diacylglycerol biosynthesis; CDP-diacylglycerol from sn-glycerol 3-phosphate: step 1/3. The sequence is that of Glycerol-3-phosphate acyltransferase from Shewanella sp. (strain W3-18-1).